The chain runs to 279 residues: Pantothenate synthetase (279 aa).

ATP is bound at residue 26–33 (MGNLHEGH). Catalysis depends on His33, which acts as the Proton donor. Gln57 is a (R)-pantoate binding site. Residue Gln57 coordinates beta-alanine. 144–147 (GKKD) lines the ATP pocket. (R)-pantoate is bound at residue Gln150. ATP-binding positions include Val173 and 181 to 184 (LSSR).

The protein belongs to the pantothenate synthetase family. In terms of assembly, homodimer.

It localises to the cytoplasm. It catalyses the reaction (R)-pantoate + beta-alanine + ATP = (R)-pantothenate + AMP + diphosphate + H(+). It functions in the pathway cofactor biosynthesis; (R)-pantothenate biosynthesis; (R)-pantothenate from (R)-pantoate and beta-alanine: step 1/1. Catalyzes the condensation of pantoate with beta-alanine in an ATP-dependent reaction via a pantoyl-adenylate intermediate. This is Pantothenate synthetase from Burkholderia lata (strain ATCC 17760 / DSM 23089 / LMG 22485 / NCIMB 9086 / R18194 / 383).